The chain runs to 641 residues: 1-deoxy-D-xylulose-5-phosphate synthase (641 aa).

Thiamine diphosphate contacts are provided by residues H71 and 112–114 (SHA). D144 is a Mg(2+) binding site. Thiamine diphosphate-binding positions include 145-146 (GA), N173, Y284, and E365. Residue N173 coordinates Mg(2+).

Belongs to the transketolase family. DXPS subfamily. Homodimer. Mg(2+) serves as cofactor. Thiamine diphosphate is required as a cofactor.

It carries out the reaction D-glyceraldehyde 3-phosphate + pyruvate + H(+) = 1-deoxy-D-xylulose 5-phosphate + CO2. It functions in the pathway metabolic intermediate biosynthesis; 1-deoxy-D-xylulose 5-phosphate biosynthesis; 1-deoxy-D-xylulose 5-phosphate from D-glyceraldehyde 3-phosphate and pyruvate: step 1/1. Its function is as follows. Catalyzes the acyloin condensation reaction between C atoms 2 and 3 of pyruvate and glyceraldehyde 3-phosphate to yield 1-deoxy-D-xylulose-5-phosphate (DXP). The sequence is that of 1-deoxy-D-xylulose-5-phosphate synthase from Mycobacterium avium (strain 104).